The sequence spans 685 residues: Sulfite reductase [ferredoxin], chloroplastic (685 aa).

A chloroplast-targeting transit peptide spans 1-51 (MTTSFAAAALRDPKLQIPNYHGLRSSSAASSLSRNALSVPSSTRSSSLIRA). The [4Fe-4S] cluster site is built by Cys-495, Cys-501, Cys-541, and Cys-545. Cys-545 is a binding site for siroheme.

It belongs to the nitrite and sulfite reductase 4Fe-4S domain family. Monomer. Interacts with ferredoxin. The cofactor is siroheme. It depends on [4Fe-4S] cluster as a cofactor. In terms of processing, phosphorylated; this phosphorylation reduces DNA-binding. Expressed in leaves, stems, and roots.

It localises to the plastid. It is found in the chloroplast stroma. The protein resides in the chloroplast nucleoid. The protein localises to the plastid stroma. The enzyme catalyses hydrogen sulfide + 6 oxidized [2Fe-2S]-[ferredoxin] + 3 H2O = sulfite + 6 reduced [2Fe-2S]-[ferredoxin] + 7 H(+). Essential protein with sulfite reductase activity required in assimilatory sulfate reduction pathway during both primary and secondary metabolism and thus involved in development and growth. In terms of biological role, DNA-binding protein that binds to both double-stranded and single-stranded DNA without significant sequence specificity to reversibly repress the transcriptional activity of chloroplast nucleoids by promoting DNA compaction and possibly regulate DNA replication. This Pisum sativum (Garden pea) protein is Sulfite reductase [ferredoxin], chloroplastic (SIR).